The sequence spans 610 residues: MEEDEGADDGEQEEEEVLLVNVGSTYPCKRSDGSQHDADIVKTRYNKQAGREEYYVHYVGLNRRQNEWVDKSRLVLTKPPKEVETNGTDQEEMTEPTEQPDSKTPQKRKLEEPEPEPKKAKVEDKDASKTAASLGAAGDFAEELTCPLCVELFKDPVMVACGHNFCRSCIDKVWEGQSSFACPECKESITDRKYTINRVLANLAKKAACTPVTPVEKKTRPLEKCSEHDERLKLYCKDDGTLGCVICRDSLKHASHNFLPILDAIGVYREELSAIVAPLEASLKVTEQLSGEQSDKIEQHNKNVSQYKEHVTSEFEKLHKFLKEREEKLLEQLKEQGDNLLTEMENNLVKMQENQDAIKKTISLAKERMEETDSISFLTDIKTFIDKCQEQQRAVISTGNTLLSKELCQGTFKGPIQYIMWKELKSVITPSLTPMLLDPNSAHPNLHLSDGLTSVRYGENKLSLPDNPKRFSQCILVLGSQGFDSGRHYWEVEVGDKTAWDVGMASESSNRKGKIKLNPKNGYWAIWLRNGNRYKALESPSKALSLTSHPRKIGVYVDYEGGQISFYNADNMTIIYTFSATFTEKLYPYLSPFLHDSGKNVDALRFVHNQ.

A Tudor-knot domain is found at asparagine 21–valine 75. A disordered region spans residues proline 79–alanine 127. At threonine 104 the chain carries Phosphothreonine; by CDK1. The segment covering arginine 108–alanine 127 has biased composition (basic and acidic residues). Residues cysteine 146–lysine 186 form an RING-type zinc finger. The B box-type zinc finger occupies arginine 220–isoleucine 261. 4 residues coordinate Zn(2+): cysteine 225, histidine 228, cysteine 247, and histidine 253. Residues aspartate 295 to serine 374 adopt a coiled-coil conformation. Residues proline 415–glutamine 610 form the B30.2/SPRY domain.

In terms of assembly, monomer. Abundant in oocytes. At the neurula stage, low expression in dorsal embryo region including neural folds and somites.

The protein localises to the nucleus. In terms of biological role, transcription factor that determines dorsal-ventral body axis. The sequence is that of Nuclear factor 7, ovary from Xenopus laevis (African clawed frog).